The chain runs to 488 residues: Kynurenine 3-monooxygenase 2 (488 aa).

It belongs to the aromatic-ring hydroxylase family. KMO subfamily. FAD serves as cofactor.

The protein resides in the mitochondrion outer membrane. It catalyses the reaction L-kynurenine + NADPH + O2 + H(+) = 3-hydroxy-L-kynurenine + NADP(+) + H2O. Its pathway is cofactor biosynthesis; NAD(+) biosynthesis; quinolinate from L-kynurenine: step 1/3. In terms of biological role, catalyzes the hydroxylation of L-kynurenine (L-Kyn) to form 3-hydroxy-L-kynurenine (L-3OHKyn). Required for synthesis of quinolinic acid. The chain is Kynurenine 3-monooxygenase 2 (bna4-2) from Aspergillus niger (strain ATCC MYA-4892 / CBS 513.88 / FGSC A1513).